Here is a 231-residue protein sequence, read N- to C-terminus: Thymidylate kinase (231 aa).

10–17 serves as a coordination point for ATP; that stretch reads GGEGAGKT.

Belongs to the thymidylate kinase family.

It catalyses the reaction dTMP + ATP = dTDP + ADP. Functionally, phosphorylation of dTMP to form dTDP in both de novo and salvage pathways of dTTP synthesis. The polypeptide is Thymidylate kinase (Acaryochloris marina (strain MBIC 11017)).